The sequence spans 541 residues: Nectin 1b (541 aa).

Residues 1–21 (MDKQESFFVGHKSHRCSQNRS) form the signal peptide. At 22-396 (VSQIHQRTSR…PAELHSSGAA (375 aa)) the chain is on the extracellular side. 7 N-linked (GlcNAc...) asparagine glycosylation sites follow: Asn51, Asn105, Asn180, Asn242, Asn326, Asn337, and Asn372. The Ig-like V-type domain occupies 77–182 (GDTVELKCLF…GNRENMVNLT (106 aa)). Cys84 and Cys165 form a disulfide bridge. 2 Ig-like C2-type domains span residues 187–282 (PVTK…VILN) and 287–374 (PEVK…VNVT). Intrachain disulfides connect Cys212-Cys266 and Cys309-Cys356. A helical membrane pass occupies residues 397 to 417 (IGGAVGGVALLVAAIALLVFF). Residues 418-541 (LRRRQRTFKG…SVISKKEWYV (124 aa)) lie on the Cytoplasmic side of the membrane. A disordered region spans residues 440 to 507 (YSKAGGMPAH…VDEGESRDYD (68 aa)). Residues 479–493 (SGDRDFDGNSEDLKR) show a composition bias toward basic and acidic residues.

Belongs to the nectin family. Cis- and trans-homodimer. Can form trans-heterodimers. In terms of tissue distribution, expressed in the developing eye and nervous system.

The protein resides in the cell membrane. Its subcellular location is the cell junction. The protein localises to the adherens junction. Its function is as follows. Cell adhesion molecule that promotes cell-cell contacts and plays important roles in the development of the nervous system. Acts by forming homophilic or heterophilic trans-dimers. This chain is Nectin 1b, found in Danio rerio (Zebrafish).